The following is a 257-amino-acid chain: Glycerol-3-phosphate acyltransferase (257 aa).

Transmembrane regions (helical) follow at residues 7–27 (IVMA…LIGS), 66–86 (ILTL…TYII), 104–124 (AILV…PIFF), 140–160 (ITVD…ILLI), 164–184 (MSLS…VPGI), and 203–223 (YVIK…SLLI).

The protein belongs to the PlsY family. Probably interacts with PlsX.

It localises to the cell membrane. It catalyses the reaction an acyl phosphate + sn-glycerol 3-phosphate = a 1-acyl-sn-glycero-3-phosphate + phosphate. It participates in lipid metabolism; phospholipid metabolism. Its function is as follows. Catalyzes the transfer of an acyl group from acyl-phosphate (acyl-PO(4)) to glycerol-3-phosphate (G3P) to form lysophosphatidic acid (LPA). This enzyme utilizes acyl-phosphate as fatty acyl donor, but not acyl-CoA or acyl-ACP. The protein is Glycerol-3-phosphate acyltransferase of Ureaplasma parvum serovar 3 (strain ATCC 700970).